Reading from the N-terminus, the 308-residue chain is L-lactate dehydrogenase 2 (308 aa).

Residues Val13, Asp34, Arg39, Tyr64, and 78-79 (GV) each bind NAD(+). Residue Arg87 participates in substrate binding. Position 100 (Thr100) interacts with NAD(+). 119–122 (NPVD) serves as a coordination point for substrate. Position 142 (Thr142) interacts with NAD(+). 147-150 (DSMR) provides a ligand contact to substrate. His174 functions as the Proton acceptor in the catalytic mechanism. Thr224 provides a ligand contact to substrate.

The protein belongs to the LDH/MDH superfamily. LDH family. In terms of assembly, homotetramer.

It is found in the cytoplasm. It carries out the reaction (S)-lactate + NAD(+) = pyruvate + NADH + H(+). The protein operates within fermentation; pyruvate fermentation to lactate; (S)-lactate from pyruvate: step 1/1. In terms of biological role, catalyzes the conversion of lactate to pyruvate. This Lactobacillus acidophilus (strain ATCC 700396 / NCK56 / N2 / NCFM) protein is L-lactate dehydrogenase 2.